We begin with the raw amino-acid sequence, 633 residues long: Threonine--tRNA ligase (633 aa).

In terms of domain architecture, TGS spans 1-61 (MINIYFNNNL…TENCTFEVIT (61 aa)). Positions 242–533 (DHRKIGKELE…LIEHHSGKFP (292 aa)) are catalytic. Residues Cys333, His384, and His510 each coordinate Zn(2+).

This sequence belongs to the class-II aminoacyl-tRNA synthetase family. As to quaternary structure, homodimer. Requires Zn(2+) as cofactor.

It localises to the cytoplasm. The enzyme catalyses tRNA(Thr) + L-threonine + ATP = L-threonyl-tRNA(Thr) + AMP + diphosphate + H(+). Catalyzes the attachment of threonine to tRNA(Thr) in a two-step reaction: L-threonine is first activated by ATP to form Thr-AMP and then transferred to the acceptor end of tRNA(Thr). Also edits incorrectly charged L-seryl-tRNA(Thr). The polypeptide is Threonine--tRNA ligase (Ehrlichia canis (strain Jake)).